The sequence spans 804 residues: Probable phosphoketolase (804 aa).

It belongs to the XFP family. The cofactor is thiamine diphosphate.

This Mycobacterium avium (strain 104) protein is Probable phosphoketolase.